We begin with the raw amino-acid sequence, 210 residues long: Proteasome subunit beta (210 aa).

Residues 1-9 (MIHDKVFKG) constitute a propeptide, removed in mature form; by autocatalysis. Thr-10 (nucleophile) is an active-site residue.

This sequence belongs to the peptidase T1B family. The 20S proteasome core is composed of 14 alpha and 14 beta subunits that assemble into four stacked heptameric rings, resulting in a barrel-shaped structure. The two inner rings, each composed of seven catalytic beta subunits, are sandwiched by two outer rings, each composed of seven alpha subunits. The catalytic chamber with the active sites is on the inside of the barrel. Has a gated structure, the ends of the cylinder being occluded by the N-termini of the alpha-subunits. Is capped at one or both ends by the proteasome regulatory ATPase, PAN.

The protein resides in the cytoplasm. It carries out the reaction Cleavage of peptide bonds with very broad specificity.. Its activity is regulated as follows. The formation of the proteasomal ATPase PAN-20S proteasome complex, via the docking of the C-termini of PAN into the intersubunit pockets in the alpha-rings, triggers opening of the gate for substrate entry. Interconversion between the open-gate and close-gate conformations leads to a dynamic regulation of the 20S proteasome proteolysis activity. Its function is as follows. Component of the proteasome core, a large protease complex with broad specificity involved in protein degradation. In Ferroglobus placidus (strain DSM 10642 / AEDII12DO), this protein is Proteasome subunit beta.